The chain runs to 254 residues: Nickel import ATP-binding protein NikD (254 aa).

Residues proline 2–valine 241 form the ABC transporter domain. Glycine 36–serine 43 contacts ATP.

It belongs to the ABC transporter superfamily. Nickel importer (TC 3.A.1.5.3) family. The complex is composed of two ATP-binding proteins (NikD and NikE), two transmembrane proteins (NikB and NikC) and a solute-binding protein (NikA).

Its subcellular location is the cell inner membrane. The catalysed reaction is Ni(2+)(out) + ATP + H2O = Ni(2+)(in) + ADP + phosphate + H(+). In terms of biological role, part of the ABC transporter complex NikABCDE involved in nickel import. Responsible for energy coupling to the transport system. This is Nickel import ATP-binding protein NikD from Shigella flexneri.